The chain runs to 208 residues: Thymidylate kinase (208 aa).

G10–T17 provides a ligand contact to ATP.

It belongs to the thymidylate kinase family.

It carries out the reaction dTMP + ATP = dTDP + ADP. Phosphorylation of dTMP to form dTDP in both de novo and salvage pathways of dTTP synthesis. The chain is Thymidylate kinase from Bacillus mycoides (strain KBAB4) (Bacillus weihenstephanensis).